A 273-amino-acid polypeptide reads, in one-letter code: Dermonecrotic toxin LapSicTox-alphaIB2 (273 aa).

Histidine 5 is an active-site residue. The Mg(2+) site is built by glutamate 25 and aspartate 27. Histidine 41 acts as the Nucleophile in catalysis. Cystine bridges form between cysteine 45-cysteine 51 and cysteine 47-cysteine 190. A Mg(2+)-binding site is contributed by aspartate 85. Asparagine 250 carries N-linked (GlcNAc...) asparagine glycosylation.

Belongs to the arthropod phospholipase D family. Class II subfamily. Mg(2+) is required as a cofactor. In terms of tissue distribution, expressed by the venom gland.

Its subcellular location is the secreted. It carries out the reaction an N-(acyl)-sphingosylphosphocholine = an N-(acyl)-sphingosyl-1,3-cyclic phosphate + choline. The catalysed reaction is an N-(acyl)-sphingosylphosphoethanolamine = an N-(acyl)-sphingosyl-1,3-cyclic phosphate + ethanolamine. The enzyme catalyses a 1-acyl-sn-glycero-3-phosphocholine = a 1-acyl-sn-glycero-2,3-cyclic phosphate + choline. It catalyses the reaction a 1-acyl-sn-glycero-3-phosphoethanolamine = a 1-acyl-sn-glycero-2,3-cyclic phosphate + ethanolamine. Functionally, dermonecrotic toxins cleave the phosphodiester linkage between the phosphate and headgroup of certain phospholipids (sphingolipid and lysolipid substrates), forming an alcohol (often choline) and a cyclic phosphate. This toxin acts on sphingomyelin (SM). It may also act on ceramide phosphoethanolamine (CPE), lysophosphatidylcholine (LPC) and lysophosphatidylethanolamine (LPE), but not on lysophosphatidylserine (LPS), and lysophosphatidylglycerol (LPG). It acts by transphosphatidylation, releasing exclusively cyclic phosphate products as second products. Induces dermonecrosis, hemolysis, increased vascular permeability, edema, inflammatory response, and platelet aggregation. The chain is Dermonecrotic toxin LapSicTox-alphaIB2 from Loxosceles apachea (Apache recluse spider).